A 129-amino-acid chain; its full sequence is Antimicrobial peptide NK-lysin (129 aa).

Residues 1–6 (PGLAFS) form the signal peptide. Residues 7–46 (GLTPEHSALARAHPCDGEQFCQNLAPEDPQGDQLLQREEL) constitute a propeptide that is removed on maturation. The Saposin B-type domain occupies 46-126 (LGLICESCRK…VDIKICKEKT (81 aa)). 3 disulfide bridges follow: C50-C122, C53-C116, and C81-C91. Positions 125-129 (KTGLI) are excised as a propeptide.

In terms of tissue distribution, cytotoxic T and NK cells.

The protein resides in the secreted. In terms of biological role, may be an effector molecule of cytotoxic activity. High activity against E.coli and B.megaterium, moderate against A.calcoaceticus and S.pyogenes. No activity against P.aeruginosa, S.aureus and Salmonella. Has some antifungal activity against C.albicans. The protein is Antimicrobial peptide NK-lysin (NKL) of Sus scrofa (Pig).